A 537-amino-acid chain; its full sequence is Phosphoenolpyruvate carboxykinase (ATP) (537 aa).

The substrate site is built by Arg61, Tyr195, and Lys201. ATP-binding positions include Lys201, His220, and 236–244; that span reads GLSGTGKTT. Lys201 and His220 together coordinate Mn(2+). Asp257 lines the Mn(2+) pocket. Residues Glu285, Arg323, and Thr448 each coordinate ATP. A substrate-binding site is contributed by Arg323.

Belongs to the phosphoenolpyruvate carboxykinase (ATP) family. Requires Mn(2+) as cofactor.

Its subcellular location is the cytoplasm. It catalyses the reaction oxaloacetate + ATP = phosphoenolpyruvate + ADP + CO2. It participates in carbohydrate biosynthesis; gluconeogenesis. In terms of biological role, involved in the gluconeogenesis. Catalyzes the conversion of oxaloacetate (OAA) to phosphoenolpyruvate (PEP) through direct phosphoryl transfer between the nucleoside triphosphate and OAA. This is Phosphoenolpyruvate carboxykinase (ATP) from Rhodopseudomonas palustris (strain HaA2).